A 132-amino-acid chain; its full sequence is Large ribosomal subunit protein uL14 (132 aa).

It belongs to the universal ribosomal protein uL14 family. In terms of assembly, part of the 50S ribosomal subunit. Forms a cluster with proteins L3 and L24e, part of which may contact the 16S rRNA in 2 intersubunit bridges.

Binds to 23S rRNA. Forms part of two intersubunit bridges in the 70S ribosome. This is Large ribosomal subunit protein uL14 from Methanocaldococcus jannaschii (strain ATCC 43067 / DSM 2661 / JAL-1 / JCM 10045 / NBRC 100440) (Methanococcus jannaschii).